A 194-amino-acid chain; its full sequence is UPF0301 protein BT_0659 (194 aa).

It belongs to the UPF0301 (AlgH) family.

This is UPF0301 protein BT_0659 from Bartonella tribocorum (strain CIP 105476 / IBS 506).